Reading from the N-terminus, the 269-residue chain is S-adenosylmethionine decarboxylase proenzyme (269 aa).

Ser-118 (schiff-base intermediate with substrate; via pyruvic acid) is an active-site residue. Residue Ser-118 is modified to Pyruvic acid (Ser); by autocatalysis. Residue His-123 is the Proton acceptor; for processing activity of the active site. Catalysis depends on Cys-146, which acts as the Proton donor; for catalytic activity.

This sequence belongs to the prokaryotic AdoMetDC family. Type 2 subfamily. In terms of assembly, heterooctamer of four alpha and four beta chains arranged as a tetramer of alpha/beta heterodimers. It depends on pyruvate as a cofactor. Post-translationally, is synthesized initially as an inactive proenzyme. Formation of the active enzyme involves a self-maturation process in which the active site pyruvoyl group is generated from an internal serine residue via an autocatalytic post-translational modification. Two non-identical subunits are generated from the proenzyme in this reaction, and the pyruvate is formed at the N-terminus of the alpha chain, which is derived from the carboxyl end of the proenzyme. The post-translation cleavage follows an unusual pathway, termed non-hydrolytic serinolysis, in which the side chain hydroxyl group of the serine supplies its oxygen atom to form the C-terminus of the beta chain, while the remainder of the serine residue undergoes an oxidative deamination to produce ammonia and the pyruvoyl group blocking the N-terminus of the alpha chain.

It catalyses the reaction S-adenosyl-L-methionine + H(+) = S-adenosyl 3-(methylsulfanyl)propylamine + CO2. Its pathway is amine and polyamine biosynthesis; S-adenosylmethioninamine biosynthesis; S-adenosylmethioninamine from S-adenosyl-L-methionine: step 1/1. Functionally, catalyzes the decarboxylation of S-adenosylmethionine to S-adenosylmethioninamine (dcAdoMet), the propylamine donor required for the synthesis of the polyamines spermine and spermidine from the diamine putrescine. The polypeptide is S-adenosylmethionine decarboxylase proenzyme (Brevibacillus brevis (strain 47 / JCM 6285 / NBRC 100599)).